The primary structure comprises 416 residues: NADH-quinone oxidoreductase subunit H (416 aa).

Transmembrane regions (helical) follow at residues 16 to 36 (LILA…LAAI), 84 to 104 (PVYL…FAVI), 124 to 144 (LAVA…GIVL), 165 to 185 (VVSY…YAGT), 197 to 217 (STWY…SMVG), 260 to 280 (VSAL…PISL), 288 to 308 (WWPL…YIWL), 320 to 340 (FMAI…MIVA), and 353 to 373 (WASG…VVLW).

Belongs to the complex I subunit 1 family. In terms of assembly, NDH-1 is composed of 14 different subunits. Subunits NuoA, H, J, K, L, M, N constitute the membrane sector of the complex.

The protein resides in the cell membrane. It catalyses the reaction a quinone + NADH + 5 H(+)(in) = a quinol + NAD(+) + 4 H(+)(out). In terms of biological role, NDH-1 shuttles electrons from NADH, via FMN and iron-sulfur (Fe-S) centers, to quinones in the respiratory chain. The immediate electron acceptor for the enzyme in this species is believed to be menaquinone. Couples the redox reaction to proton translocation (for every two electrons transferred, four hydrogen ions are translocated across the cytoplasmic membrane), and thus conserves the redox energy in a proton gradient. This subunit may bind ubiquinone. The protein is NADH-quinone oxidoreductase subunit H of Mycobacterium sp. (strain JLS).